Reading from the N-terminus, the 326-residue chain is uncharacterized protein (326 aa).

Residues 293 to 326 form a disordered region; the sequence is HRNYDANHSTSGEEENSGSRSRIAELSQSTIHRR.

This is an uncharacterized protein from Oryza latifolia (Indian wild rice).